The chain runs to 457 residues: MPPAGQDDLDFLKYAMESYVADVNADIGKTTIVFTLREKAGALAETLKLFQAHDVNLSHIESRPSKTHEGCYEVLVEFAEAEDHRKIEGVIEHFQQKAEKKVLVQDWNTKNKQNKDSVPWFPQKINDIDQFANRILSYGAELDADHPGFKDMTYRERRKFFADIAFNFKHGDKIPTITYTDEEIATWRTVYNELTVMYPKNACQEFNYIFPLLQQNCGFGPDRIPQLQDVSDFLKDCTGYTIRPVAGLLSSRDFLAGLAFRVFHSTQYIRHHSAPKYTPEPDICHELLGHVPLFADVEFAQFSQEIGLASLGAPDDVIEKLATLYWFTIEFGICQQDGEKKAYGAGLLSSFGELQYALSDKPEVVDFDPAVCCVTKYPITEYQPKYFLAESFASAKNKLKSWAATINRPFQIRYNAYTQRVEILDKVAALQRLARDIRSDISTLEEALGKVNNLKMK.

One can recognise an ACT domain in the interval threonine 31–asparagine 108. Histidine 285, histidine 290, and glutamate 330 together coordinate Fe cation.

The protein belongs to the biopterin-dependent aromatic amino acid hydroxylase family. Homotetramer. It depends on Fe(2+) as a cofactor. Expressed in the seam cells of the lateral hypodermis, in the ventral hypodermis and in the hyp7 hypodermal syncytium, in hypodermal cells in the tail and in body wall muscle cells (at protein level).

It is found in the cytoplasm. It catalyses the reaction (6R)-L-erythro-5,6,7,8-tetrahydrobiopterin + L-phenylalanine + O2 = (4aS,6R)-4a-hydroxy-L-erythro-5,6,7,8-tetrahydrobiopterin + L-tyrosine. The enzyme catalyses (6R)-L-erythro-5,6,7,8-tetrahydrobiopterin + L-tryptophan + O2 = 5-hydroxy-L-tryptophan + (4aS,6R)-4a-hydroxy-L-erythro-5,6,7,8-tetrahydrobiopterin. Its pathway is amino-acid degradation; L-phenylalanine degradation; acetoacetate and fumarate from L-phenylalanine: step 1/6. Its activity is regulated as follows. Inhibited by tetrahydrobiopterin. Unlike its mammalian orthologs, pah-1 does not exhibit allosteric binding behavior for phenylalanine. In terms of biological role, catalyzes the hydroxylation of L-phenylalanine to L-tyrosine. Catalyzes the hydroxylation of tryptophan to 5-hydroxy-L-tryptophan. Plays a role in the biosynthesis of a melanin-like cuticle pigment. The protein is Phenylalanine-4-hydroxylase of Caenorhabditis elegans.